The primary structure comprises 344 residues: Phenylalanine--tRNA ligase alpha subunit (344 aa).

A Mg(2+)-binding site is contributed by glutamate 256.

This sequence belongs to the class-II aminoacyl-tRNA synthetase family. Phe-tRNA synthetase alpha subunit type 1 subfamily. In terms of assembly, tetramer of two alpha and two beta subunits. Mg(2+) serves as cofactor.

It localises to the cytoplasm. The catalysed reaction is tRNA(Phe) + L-phenylalanine + ATP = L-phenylalanyl-tRNA(Phe) + AMP + diphosphate + H(+). In Halalkalibacterium halodurans (strain ATCC BAA-125 / DSM 18197 / FERM 7344 / JCM 9153 / C-125) (Bacillus halodurans), this protein is Phenylalanine--tRNA ligase alpha subunit (pheS).